The primary structure comprises 624 residues: Alpha-mannosidase I MNS4 (624 aa).

At 1-7 (MDSNFKW) the chain is on the cytoplasmic side. Residues 8–28 (LLFAILISLTFSGFVLHHGVL) traverse the membrane as a helical; Signal-anchor for type II membrane protein segment. Over 29-624 (AESVKPDEAK…ETDDQRSYSS (596 aa)) the chain is Lumenal. The N-linked (GlcNAc...) asparagine glycan is linked to asparagine 115. Catalysis depends on glutamate 122, which acts as the Proton donor. Residue aspartate 262 is part of the active site. Glutamate 355 acts as the Proton donor in catalysis. Glutamate 376 is a catalytic residue. A Ca(2+)-binding site is contributed by threonine 466. Residue asparagine 494 is glycosylated (N-linked (GlcNAc...) asparagine). The tract at residues 574–624 (QTVEKRPQEEEGFTSQSEPIMTISGGSSNDQTGQELTLLESETDDQRSYSS) is disordered. The segment covering 586–608 (FTSQSEPIMTISGGSSNDQTGQE) has biased composition (polar residues).

The protein belongs to the glycosyl hydrolase 47 family. The cofactor is Ca(2+).

It localises to the endoplasmic reticulum membrane. The protein operates within protein modification; protein glycosylation. Functionally, can convert Man(9)GlcNAc(2) and Man(8)GlcNAc(2) into N-glycans with a terminal alpha-1,6-linked Man residue in the C-branch. Functions in the formation of unique N-glycan structures that are specifically recognized by components of the endoplasmic reticulum-associated degradation (ERAD) machinery, which leads to the degradation of misfolded glycoproteins. Most likely generates N-glycan signal on misfolded glycoproteins that is subsequently recognized by OS9. Required for ERAD of the heavily glycosylated and misfolded BRI1 variants BRI1-5 and BRI1-9. Does not seem to play role in N-glycan processing of correctly folded proteins destined for secretion. The chain is Alpha-mannosidase I MNS4 (MNS4) from Arabidopsis thaliana (Mouse-ear cress).